The following is a 204-amino-acid chain: MFKKIAADALGLSDIGKIIEPQDYDKTDADDYVMHEDNEKIYFLIKTKADEYCFTNLALIHVDGERATSSKRTLKRYPYSQYKISDVFLETAGKVDLDVEIKFKLGGEQFDIDVHKDQIEKLKDLYKALLRIAETTYENDILINQAEQSLDKAVTILHHTRPEHVNIETQYKELTEFGFTWLTSVRSQYHIKDFGDVFEKYINN.

A coiled-coil region spans residues 109–136 (QFDIDVHKDQIEKLKDLYKALLRIAETT).

This is an uncharacterized protein from Bacillus subtilis (strain 168).